Reading from the N-terminus, the 187-residue chain is Peptidyl-tRNA hydrolase (187 aa).

A tRNA-binding site is contributed by Y14. H19 functions as the Proton acceptor in the catalytic mechanism. F60 and N62 together coordinate tRNA.

The protein belongs to the PTH family. Monomer.

It localises to the cytoplasm. The catalysed reaction is an N-acyl-L-alpha-aminoacyl-tRNA + H2O = an N-acyl-L-amino acid + a tRNA + H(+). Functionally, hydrolyzes ribosome-free peptidyl-tRNAs (with 1 or more amino acids incorporated), which drop off the ribosome during protein synthesis, or as a result of ribosome stalling. Catalyzes the release of premature peptidyl moieties from peptidyl-tRNA molecules trapped in stalled 50S ribosomal subunits, and thus maintains levels of free tRNAs and 50S ribosomes. The sequence is that of Peptidyl-tRNA hydrolase from Pseudothermotoga lettingae (strain ATCC BAA-301 / DSM 14385 / NBRC 107922 / TMO) (Thermotoga lettingae).